The sequence spans 499 residues: MPNIEADRVTSIPENNDRKPKSQPLRNNLHDTVKSYSIRDAATANIGPPAERHYPWGCPVTHTKEKFYTICADYAFLNQATSLCKSSSSVCSSSSEDKSALSNTINYIDLQTSESDSACNEDASLDSLSGSLGTRPLAWEIDTSDFSTMTTRLKSRSGVNKQTPKKKTERKAKPLRDCPQHLILDDVKQRKVLDLRRWYCISRPQYKTSCGISSLVSCWNFLYSTLGAGSLPPITQEEALHILGFQPPFEEIRFGPFTGNTTLMRWFRQINDHYHVKGCSYVLYKPHGKNKTAGETAVGALSKLTQGLKEDSTAYIYHCQNHYFCPIGFEATPAKASKAYRGQLFPHEVEYWILIGEPSRKHPTIHCKKWTDIVTDLNTQNPEYFDIRHPERGLQYRKTKKVGGNLHCLLAFQRLSWQRFGPWPLQLGNLRPEPQPPIQGRRIPKSESEDNVSKKQHGRLGRSFSAGFQQELAWKRMCNIRERRGSGSPESDTDCEGND.

Disordered regions lie at residues 1 to 29 (MPNIEADRVTSIPENNDRKPKSQPLRNNL), 153 to 172 (LKSRSGVNKQTPKKKTERKA), and 428 to 465 (GNLRPEPQPPIQGRRIPKSESEDNVSKKQHGRLGRSFS). Residues 153 to 162 (LKSRSGVNKQ) are compositionally biased toward polar residues. Residues 444 to 453 (PKSESEDNVS) show a composition bias toward basic and acidic residues.

The protein belongs to the BIVM family.

The protein localises to the cytoplasm. It localises to the nucleus. In Xenopus tropicalis (Western clawed frog), this protein is Basic immunoglobulin-like variable motif-containing protein (bivm).